We begin with the raw amino-acid sequence, 469 residues long: MSAVMTPAGFTDYKVADITLAAWGRRELIIAESEMPALMGLRRKYAGQQPLKGAKILGCIHMTIQTGVLIETLVALGAEVRWSSCNIFSTQDQAAAAIAAAGIPVFAWKGETEEEYEWCIEQTILKDGQPWDANMVLDDGGDLTEILHKKYPQMLERIHGITEETTTGVHRLLDMLKNGTLKVPAINVNDSVTKSKNDNKYGCRHSLNDAIKRGTDHLLSGKQALVIGYGDVGKGSSQSLRQEGMIVKVAEVDPICAMQACMDGFEVVSPYKNGINDGTEASIDAALLGKIDLIVTTTGNVNVCDANMLKALKKRAVVCNIGHFDNEIDTAFMRKNWAWEEVKPQVHKIHRTGKDGFDAHNDDYLILLAEGRLVNLGNATGHPSRIMDGSFANQVLAQIHLFEQKYADLPAAEKAKRLSVEVLPKKLDEEVALEMVKGFGGVVTQLTPKQAEYIGVSVEGPFKPDTYRY.

Substrate contacts are provided by Thr63, Asp139, and Glu164. An NAD(+)-binding site is contributed by 165 to 167; that stretch reads TTT. Substrate is bound by residues Lys194 and Asp198. NAD(+) contacts are provided by residues Asn199, 228–233, Glu251, Asn300, 321–323, and Asn375; these read GYGDVG and IGH.

The protein belongs to the adenosylhomocysteinase family. NAD(+) is required as a cofactor.

Its subcellular location is the cytoplasm. The enzyme catalyses S-adenosyl-L-homocysteine + H2O = L-homocysteine + adenosine. Its pathway is amino-acid biosynthesis; L-homocysteine biosynthesis; L-homocysteine from S-adenosyl-L-homocysteine: step 1/1. In terms of biological role, may play a key role in the regulation of the intracellular concentration of adenosylhomocysteine. The chain is Adenosylhomocysteinase from Pseudomonas aeruginosa (strain LESB58).